Reading from the N-terminus, the 981-residue chain is Ubiquitin carboxyl-terminal hydrolase 15 (981 aa).

An N-acetylalanine modification is found at alanine 2. Residues 2–223 (AEGGAADLDT…KNEDGTWPRG (222 aa)) form a mediates interaction with SART3 region. The DUSP domain occupies 7–118 (ADLDTQRSDI…GQEPIARKVV (112 aa)). Residues 216-237 (EDGTWPRGPSTPKSPGASNFST) are disordered. Threonine 226 is subject to Phosphothreonine. The segment covering 226–237 (TPKSPGASNFST) has biased composition (polar residues). A phosphoserine mark is found at serine 229 and serine 242. The USP domain occupies 289 to 933 (CGLSNLGNTC…AAYVLFYQRQ (645 aa)). The active-site Nucleophile is cysteine 298. A Phosphothreonine modification is found at threonine 602. A disordered region spans residues 629 to 694 (GSLHCCKDQN…GGDNDSENGL (66 aa)). Residues 656 to 673 (METDEPDDESSQDQELPS) are compositionally biased toward acidic residues. Catalysis depends on histidine 891, which acts as the Proton acceptor. Positions 952-981 (SAATGIPLESDEDSNDNDNDIENENCMHTN) are disordered. The span at 960–974 (ESDEDSNDNDNDIEN) shows a compositional bias: acidic residues. 2 positions are modified to phosphoserine: serine 961 and serine 965.

It belongs to the peptidase C19 family. A homodimer structure has been reported; however it is unclear whether the protein form a homodimer in vivo. Identified in a complex with the COP9 signalosome complex (CSN). Interacts with SMAD1, SMAD2 and SMAD3; the interaction is direct. Forms a complex with SMURF2 and SMAD7. Interacts with TGFBR1. Interacts with SART3; the interaction is direct. May interact with RNF20 and RNF40. May interact with PRKN. Interacts with INCA1. In terms of assembly, (Microbial infection) Interacts with human papillomavirus type 16 protein E6. In terms of processing, phosphorylated. Phosphorylation protects against ubiquitination and subsequent degradation by the proteasome. Post-translationally, ubiquitinated, leading to degradation by the proteasome. Expressed in skeletal muscle, kidney, heart, placenta, liver, thymus, lung, and ovary, with little or no expression in other tissues.

The protein localises to the cytoplasm. The protein resides in the nucleus. It is found in the mitochondrion. The catalysed reaction is Thiol-dependent hydrolysis of ester, thioester, amide, peptide and isopeptide bonds formed by the C-terminal Gly of ubiquitin (a 76-residue protein attached to proteins as an intracellular targeting signal).. Functionally, hydrolase that removes conjugated ubiquitin from target proteins and regulates various pathways such as the TGF-beta receptor signaling, NF-kappa-B and RNF41/NRDP1-PRKN pathways. Acts as a key regulator of TGF-beta receptor signaling pathway, but the precise mechanism is still unclear: according to a report, acts by promoting deubiquitination of monoubiquitinated R-SMADs (SMAD1, SMAD2 and/or SMAD3), thereby alleviating inhibition of R-SMADs and promoting activation of TGF-beta target genes. According to another reports, regulates the TGF-beta receptor signaling pathway by mediating deubiquitination and stabilization of TGFBR1, leading to an enhanced TGF-beta signal. Able to mediate deubiquitination of monoubiquitinated substrates, 'Lys-27'-, 'Lys-48'- and 'Lys-63'-linked polyubiquitin chains. May also regulate gene expression and/or DNA repair through the deubiquitination of histone H2B. Acts as an inhibitor of mitophagy by counteracting the action of parkin (PRKN): hydrolyzes cleavage of 'Lys-48'- and 'Lys-63'-linked polyubiquitin chains attached by parkin on target proteins such as MFN2, thereby reducing parkin's ability to drive mitophagy. Acts as an associated component of COP9 signalosome complex (CSN) and regulates different pathways via this association: regulates NF-kappa-B by mediating deubiquitination of NFKBIA and deubiquitinates substrates bound to VCP. Involved in endosome organization by mediating deubiquitination of SQSTM1: ubiquitinated SQSTM1 forms a molecular bridge that restrains cognate vesicles in the perinuclear region and its deubiquitination releases target vesicles for fast transport into the cell periphery. Acts as a negative regulator of antifungal immunity by mediating 'Lys-27'-linked deubiquitination of CARD9, thereby inactivating CARD9. (Microbial infection) Protects APC and human papillomavirus type 16 protein E6 against degradation via the ubiquitin proteasome pathway. The chain is Ubiquitin carboxyl-terminal hydrolase 15 from Homo sapiens (Human).